The chain runs to 338 residues: Ketol-acid reductoisomerase (NADP(+)) (338 aa).

Residues 1-181 (MKVFYDKDCD…GGGRTGIIET (181 aa)) form the KARI N-terminal Rossmann domain. Residues 24–27 (YGSQ), arginine 47, serine 50, threonine 52, and 82–85 (DEFQ) each bind NADP(+). Histidine 107 is an active-site residue. Residue glycine 133 coordinates NADP(+). Residues 182 to 327 (TFKDETETDL…EQLRSMMPWI (146 aa)) enclose the KARI C-terminal knotted domain. Mg(2+) is bound by residues aspartate 190, glutamate 194, glutamate 226, and glutamate 230. Serine 251 serves as a coordination point for substrate.

It belongs to the ketol-acid reductoisomerase family. The cofactor is Mg(2+).

It catalyses the reaction (2R)-2,3-dihydroxy-3-methylbutanoate + NADP(+) = (2S)-2-acetolactate + NADPH + H(+). It carries out the reaction (2R,3R)-2,3-dihydroxy-3-methylpentanoate + NADP(+) = (S)-2-ethyl-2-hydroxy-3-oxobutanoate + NADPH + H(+). The protein operates within amino-acid biosynthesis; L-isoleucine biosynthesis; L-isoleucine from 2-oxobutanoate: step 2/4. It functions in the pathway amino-acid biosynthesis; L-valine biosynthesis; L-valine from pyruvate: step 2/4. Its function is as follows. Involved in the biosynthesis of branched-chain amino acids (BCAA). Catalyzes an alkyl-migration followed by a ketol-acid reduction of (S)-2-acetolactate (S2AL) to yield (R)-2,3-dihydroxy-isovalerate. In the isomerase reaction, S2AL is rearranged via a Mg-dependent methyl migration to produce 3-hydroxy-3-methyl-2-ketobutyrate (HMKB). In the reductase reaction, this 2-ketoacid undergoes a metal-dependent reduction by NADPH to yield (R)-2,3-dihydroxy-isovalerate. In Pseudomonas fluorescens (strain ATCC BAA-477 / NRRL B-23932 / Pf-5), this protein is Ketol-acid reductoisomerase (NADP(+)).